A 102-amino-acid polypeptide reads, in one-letter code: Small integral membrane protein 29 (102 aa).

The N-linked (GlcNAc...) asparagine glycan is linked to N3. A helical membrane pass occupies residues V21–V41.

In terms of tissue distribution, expressed in spleen, thymus, prostate, testis, uterus, small intestine, colon and peripheral blood leukocytes.

It is found in the membrane. The chain is Small integral membrane protein 29 from Homo sapiens (Human).